The following is a 306-amino-acid chain: Methionyl-tRNA formyltransferase (306 aa).

Ser108–Pro111 provides a ligand contact to (6S)-5,6,7,8-tetrahydrofolate.

This sequence belongs to the Fmt family.

It catalyses the reaction L-methionyl-tRNA(fMet) + (6R)-10-formyltetrahydrofolate = N-formyl-L-methionyl-tRNA(fMet) + (6S)-5,6,7,8-tetrahydrofolate + H(+). In terms of biological role, attaches a formyl group to the free amino group of methionyl-tRNA(fMet). The formyl group appears to play a dual role in the initiator identity of N-formylmethionyl-tRNA by promoting its recognition by IF2 and preventing the misappropriation of this tRNA by the elongation apparatus. This chain is Methionyl-tRNA formyltransferase, found in Pseudarthrobacter chlorophenolicus (strain ATCC 700700 / DSM 12829 / CIP 107037 / JCM 12360 / KCTC 9906 / NCIMB 13794 / A6) (Arthrobacter chlorophenolicus).